A 435-amino-acid polypeptide reads, in one-letter code: Adenylosuccinate synthetase (435 aa).

GTP-binding positions include 17-23 (GDEGKGK) and 45-47 (GHT). Asp18 (proton acceptor) is an active-site residue. Residues Asp18 and Gly45 each coordinate Mg(2+). IMP contacts are provided by residues 18-21 (DEGK), 43-46 (NAGH), Thr134, Arg148, Gln229, Thr244, and Arg308. His46 (proton donor) is an active-site residue. Residue 304–310 (SVTGRPR) coordinates substrate. GTP-binding positions include Arg310, 336–338 (KLD), and 418–420 (STG).

The protein belongs to the adenylosuccinate synthetase family. Homodimer. Mg(2+) is required as a cofactor.

It localises to the cytoplasm. The catalysed reaction is IMP + L-aspartate + GTP = N(6)-(1,2-dicarboxyethyl)-AMP + GDP + phosphate + 2 H(+). The protein operates within purine metabolism; AMP biosynthesis via de novo pathway; AMP from IMP: step 1/2. In terms of biological role, plays an important role in the de novo pathway of purine nucleotide biosynthesis. Catalyzes the first committed step in the biosynthesis of AMP from IMP. The protein is Adenylosuccinate synthetase of Bordetella pertussis (strain Tohama I / ATCC BAA-589 / NCTC 13251).